The sequence spans 91 residues: DNA-directed RNA polymerase subunit omega (91 aa).

The protein belongs to the RNA polymerase subunit omega family. The RNAP catalytic core consists of 2 alpha, 1 beta, 1 beta' and 1 omega subunit. When a sigma factor is associated with the core the holoenzyme is formed, which can initiate transcription.

The enzyme catalyses RNA(n) + a ribonucleoside 5'-triphosphate = RNA(n+1) + diphosphate. Its function is as follows. Promotes RNA polymerase assembly. Latches the N- and C-terminal regions of the beta' subunit thereby facilitating its interaction with the beta and alpha subunits. The protein is DNA-directed RNA polymerase subunit omega of Nocardia farcinica (strain IFM 10152).